The chain runs to 267 residues: Aspartate/glutamate leucyltransferase (267 aa).

The tract at residues 246–267 (EQEEQTRPLFRPSATGFSTGQE) is disordered.

It belongs to the R-transferase family. Bpt subfamily.

It localises to the cytoplasm. It carries out the reaction N-terminal L-glutamyl-[protein] + L-leucyl-tRNA(Leu) = N-terminal L-leucyl-L-glutamyl-[protein] + tRNA(Leu) + H(+). It catalyses the reaction N-terminal L-aspartyl-[protein] + L-leucyl-tRNA(Leu) = N-terminal L-leucyl-L-aspartyl-[protein] + tRNA(Leu) + H(+). Functionally, functions in the N-end rule pathway of protein degradation where it conjugates Leu from its aminoacyl-tRNA to the N-termini of proteins containing an N-terminal aspartate or glutamate. This chain is Aspartate/glutamate leucyltransferase, found in Granulibacter bethesdensis (strain ATCC BAA-1260 / CGDNIH1).